Consider the following 243-residue polypeptide: tRNA pseudouridine synthase A (243 aa).

Catalysis depends on Asp54, which acts as the Nucleophile. Tyr112 provides a ligand contact to substrate.

The protein belongs to the tRNA pseudouridine synthase TruA family. In terms of assembly, homodimer.

It catalyses the reaction uridine(38/39/40) in tRNA = pseudouridine(38/39/40) in tRNA. Formation of pseudouridine at positions 38, 39 and 40 in the anticodon stem and loop of transfer RNAs. The chain is tRNA pseudouridine synthase A from Onion yellows phytoplasma (strain OY-M).